Here is a 287-residue protein sequence, read N- to C-terminus: Diphthine methyl ester synthase (287 aa).

S-adenosyl-L-methionine is bound by residues Leu-9, Asp-84, Gly-87, 112-113 (SI), Val-163, Val-221, and His-248.

Belongs to the diphthine synthase family.

The protein resides in the cytoplasm. It carries out the reaction 2-[(3S)-amino-3-carboxypropyl]-L-histidyl-[translation elongation factor 2] + 4 S-adenosyl-L-methionine = diphthine methyl ester-[translation elongation factor 2] + 4 S-adenosyl-L-homocysteine + 3 H(+). The protein operates within protein modification; peptidyl-diphthamide biosynthesis. Its function is as follows. S-adenosyl-L-methionine-dependent methyltransferase that catalyzes four methylations of the modified target histidine residue in translation elongation factor 2 (EF-2), to form an intermediate called diphthine methyl ester. The four successive methylation reactions represent the second step of diphthamide biosynthesis. The chain is Diphthine methyl ester synthase (DPH5) from Gibberella zeae (strain ATCC MYA-4620 / CBS 123657 / FGSC 9075 / NRRL 31084 / PH-1) (Wheat head blight fungus).